Here is a 572-residue protein sequence, read N- to C-terminus: Glutamate--tRNA ligase (572 aa).

The 'HIGH' region motif lies at 112–122 (PNPNGPPSLGN).

The protein belongs to the class-I aminoacyl-tRNA synthetase family. Glutamate--tRNA ligase type 2 subfamily.

It localises to the cytoplasm. The enzyme catalyses tRNA(Glu) + L-glutamate + ATP = L-glutamyl-tRNA(Glu) + AMP + diphosphate. Functionally, catalyzes the attachment of glutamate to tRNA(Glu) in a two-step reaction: glutamate is first activated by ATP to form Glu-AMP and then transferred to the acceptor end of tRNA(Glu). This is Glutamate--tRNA ligase from Methanocella arvoryzae (strain DSM 22066 / NBRC 105507 / MRE50).